A 126-amino-acid polypeptide reads, in one-letter code: Large ribosomal subunit protein bL12 (126 aa).

The protein belongs to the bacterial ribosomal protein bL12 family. Homodimer. Part of the ribosomal stalk of the 50S ribosomal subunit. Forms a multimeric L10(L12)X complex, where L10 forms an elongated spine to which 2 to 4 L12 dimers bind in a sequential fashion. Binds GTP-bound translation factors.

Forms part of the ribosomal stalk which helps the ribosome interact with GTP-bound translation factors. Is thus essential for accurate translation. This chain is Large ribosomal subunit protein bL12, found in Methylorubrum populi (strain ATCC BAA-705 / NCIMB 13946 / BJ001) (Methylobacterium populi).